The following is an 89-amino-acid chain: Small ribosomal subunit protein uS14 (89 aa).

The protein belongs to the universal ribosomal protein uS14 family. Part of the 30S ribosomal subunit. Contacts proteins S3 and S10.

In terms of biological role, binds 16S rRNA, required for the assembly of 30S particles and may also be responsible for determining the conformation of the 16S rRNA at the A site. This chain is Small ribosomal subunit protein uS14, found in Flavobacterium psychrophilum (strain ATCC 49511 / DSM 21280 / CIP 103535 / JIP02/86).